The chain runs to 199 residues: Superoxide dismutase [Mn/Fe] (199 aa).

H27, H81, D161, and H165 together coordinate Fe(3+). Positions 27, 81, 161, and 165 each coordinate Mn(2+).

It belongs to the iron/manganese superoxide dismutase family. Homodimer. It depends on Mn(2+) as a cofactor. Fe(3+) serves as cofactor.

It carries out the reaction 2 superoxide + 2 H(+) = H2O2 + O2. In terms of biological role, destroys superoxide anion radicals which are normally produced within the cells and which are toxic to biological systems. Catalyzes the dismutation of superoxide anion radicals into O2 and H2O2 by successive reduction and oxidation of the transition metal ion at the active site. Also contributes to the inhibition of lipid oxidation. Manganese-preferring enzyme, less active with iron than with manganese. This chain is Superoxide dismutase [Mn/Fe] (sodA), found in Staphylococcus xylosus.